The following is a 104-amino-acid chain: Large ribosomal subunit protein uL24 (104 aa).

The protein belongs to the universal ribosomal protein uL24 family. Part of the 50S ribosomal subunit.

Functionally, one of two assembly initiator proteins, it binds directly to the 5'-end of the 23S rRNA, where it nucleates assembly of the 50S subunit. Its function is as follows. One of the proteins that surrounds the polypeptide exit tunnel on the outside of the subunit. This chain is Large ribosomal subunit protein uL24, found in Enterobacter sp. (strain 638).